The sequence spans 262 residues: Nurim (262 aa).

The Nuclear segment spans residues 1–4 (MAPA). Residues 5 to 28 (LLLIPAALASFILAFGTGVEFVRF) form a helical membrane-spanning segment. The Perinuclear space segment spans residues 29 to 58 (TSLRPLLGRISESGSPDARQGWLAALQDQS). The helical transmembrane segment at 59–80 (ILVPLVWDLGLLLLFVGQHSLM) threads the bilayer. Residues 81 to 97 (ATETVKEWMSRYFGVLQ) lie on the Nuclear side of the membrane. The chain crosses the membrane as a helical span at residues 98–114 (RSLYVACTALALQLVMR). Over 115–133 (YWEPVPRGPVLWETRTEPW) the chain is Perinuclear space. Residues 134–164 (ATWVPLLCFVLHVISWLLIFSILLVFDYAEL) traverse the membrane as a helical segment. Residues 165–191 (MGLKQVYYHVLGLGEPLALKSPRALRL) lie on the Nuclear side of the membrane. A helical transmembrane segment spans residues 192–210 (FSHLRHPVCVELLTVLWVV). Over 211–216 (PTLGTD) the chain is Perinuclear space. Residues 217 to 234 (RLLLALLLTLYLGLAHGL) traverse the membrane as a helical segment. At 235-262 (DQHDLRYLRAQLQRKLHLLSRPQDGEAE) the chain is on the nuclear side.

Belongs to the nurim family.

It localises to the nucleus inner membrane. The protein is Nurim (NRM) of Bos taurus (Bovine).